Consider the following 753-residue polypeptide: CCR4-NOT transcription complex subunit 3 (753 aa).

The tract at residues 240–534 is disordered; that stretch reads ATSPPSHSHM…PPQFSTAPEI (295 aa). The span at 257-268 shows a compositional bias: low complexity; the sequence is SSSTPTSTTSSS. A compositionally biased stretch (basic and acidic residues) spans 284 to 293; that stretch reads DDKKRGRSTD. Thr292 carries the post-translational modification Phosphothreonine. Positions 294 to 315 are enriched in polar residues; it reads SEVSQSPAKNGSKPVHSNQHPQ. Ser299 is modified (phosphoserine). The segment covering 317–330 has biased composition (pro residues); that stretch reads PAVPPTYPSGPPPA. Low complexity predominate over residues 350 to 376; the sequence is PSALGPKASPAPSHNSGTPAPYAQAVA. The span at 396–408 shows a compositional bias: gly residues; it reads SGGGGGGSGGGGS. The segment covering 424-433 has biased composition (polar residues); it reads NGATSYSSVV. Residues 441–457 are compositionally biased toward low complexity; the sequence is ALSSSGGNNASSQALGP. Pro residues predominate over residues 458 to 467; it reads PSGPHNPPPS. The segment covering 479 to 491 has biased composition (gly residues); it reads GAGGVAPGSGNNS. Residue Ser542 is modified to Phosphoserine. The tract at residues 661–753 is repressor domain; that stretch reads EFYQRLSTET…YRYLEDRDLQ (93 aa).

It belongs to the CNOT2/3/5 family. In terms of assembly, component of the CCR4-NOT complex; distinct complexes seem to exist that differ in the participation of probably mutually exclusive catalytic subunits. In the complex interacts directly with CNOT2. Interacts with TIP120B and NANOS2. Interacts with EBF1. Interacts in an RNA-independent manner with BICC1 (via KH domains). In terms of tissue distribution, ubiquitous. Highly expressed in brain, heart, thymus, spleen, kidney, liver, small intestine, lung and peripheral blood leukocytes.

It localises to the cytoplasm. The protein resides in the nucleus. It is found in the P-body. Functionally, component of the CCR4-NOT complex which is one of the major cellular mRNA deadenylases and is linked to various cellular processes including bulk mRNA degradation, miRNA-mediated repression, translational repression during translational initiation and general transcription regulation. Additional complex functions may be a consequence of its influence on mRNA expression. May be involved in metabolic regulation; may be involved in recruitment of the CCR4-NOT complex to deadenylation target mRNAs involved in energy metabolism. Involved in mitotic progression and regulation of the spindle assembly checkpoint by regulating the stability of MAD1L1 mRNA. Can repress transcription and may link the CCR4-NOT complex to transcriptional regulation; the repressive function may involve histone deacetylases. Involved in the maintenance of embryonic stem (ES) cell identity. The sequence is that of CCR4-NOT transcription complex subunit 3 from Homo sapiens (Human).